Reading from the N-terminus, the 714-residue chain is Stellatatriene synthase (714 aa).

The segment at 1-325 (MEYKFSTVVD…RYNSSGSFSD (325 aa)) is stellata-2,6,19-trien synthase. Mg(2+) contacts are provided by Asp-92 and Asp-96. Residues 92 to 96 (DDVTD) carry the DDXXD motif 1 motif. The NSE motif motif lies at 276–284 (YLKIVEEYK). A geranylgeranyl diphosphate synthase region spans residues 326–713 (HQLELMKNGV…LRLIMELLKT (388 aa)). Residues 332 to 356 (KNGVPKDPASGSTNGTSNGTSNGTS) are disordered. Residues 341–356 (SGSTNGTSNGTSNGTS) show a composition bias toward low complexity. Lys-434, Arg-437, and His-466 together coordinate isopentenyl diphosphate. Residues Asp-473 and Asp-477 each coordinate Mg(2+). Residues 473 to 477 (DDVED) carry the DDXXD motif 2 motif. Arg-482 is a dimethylallyl diphosphate binding site. An isopentenyl diphosphate-binding site is contributed by Arg-483. Residues Lys-560, Thr-561, Gln-596, Asn-603, Lys-613, and Lys-623 each coordinate dimethylallyl diphosphate.

In the N-terminal section; belongs to the terpene synthase family. It in the C-terminal section; belongs to the FPP/GGPP synthase family. As to quaternary structure, hexamer.

The enzyme catalyses 4 isopentenyl diphosphate + dimethylallyl diphosphate = (2E,6E,10E,14E)-geranylfarnesyl diphosphate + 4 diphosphate. It catalyses the reaction (2E,6E,10E,14E)-geranylfarnesyl diphosphate = stellata-2,6,19-triene + diphosphate. Its pathway is secondary metabolite biosynthesis; terpenoid biosynthesis. Multifunctional diterpene synthase; part of the gene cluster that mediates the biosynthesis of the sesterterpene stellatic acid. The first step in the pathway is performed by the stellatatriene synthase that possesses both prenyl transferase and terpene cyclase activity, converting isopentenyl diphosphate and dimethylallyl diphosphate into geranylgeranyl diphosphate (GGDP) and then converting GGDP into stellata-2,6,19-triene. The cytochrome P450 monooxygenase Stl-P450 then catalyzes three successive oxidation reactions on the C-20 methyl group to generate the carboxylic acid of stellatic acid. The protein is Stellatatriene synthase of Emericella variicolor (Aspergillus stellatus).